Reading from the N-terminus, the 166-residue chain is Large ribosomal subunit protein uL10 (166 aa).

The protein belongs to the universal ribosomal protein uL10 family. As to quaternary structure, part of the ribosomal stalk of the 50S ribosomal subunit. The N-terminus interacts with L11 and the large rRNA to form the base of the stalk. The C-terminus forms an elongated spine to which L12 dimers bind in a sequential fashion forming a multimeric L10(L12)X complex.

Forms part of the ribosomal stalk, playing a central role in the interaction of the ribosome with GTP-bound translation factors. This is Large ribosomal subunit protein uL10 from Streptococcus sanguinis (strain SK36).